The sequence spans 30 residues: Kalata-B10 (30 aa).

Residues Gly-1–Asp-30 constitute a cross-link (cyclopeptide (Gly-Asp)). Cystine bridges form between Cys-5/Cys-19, Cys-9/Cys-21, and Cys-14/Cys-27.

Belongs to the cyclotide family. Moebius subfamily. This peptide occurs in both cyclic and linear forms. The linear form contains unmodified Trp-24, the cyclic peptide occurs in two forms with unmodified Trp-24, and with Trp-24 oxidized to form oxindolylalanine. Oxidation is enhanced by exposure to sunlight.

In terms of biological role, probably participates in a plant defense mechanism. In Oldenlandia affinis, this protein is Kalata-B10.